The primary structure comprises 1083 residues: MKRTIKNFLTGSITYFDTEKYFSNPNLYYYRIYPVEDNKTIKIRVSTTDNTIIHPEINKTKIILKIKILEDSIVRSLRKEIITNRNARKQLHSKGNLRYVPTTSRNPSNTDTYSSSIDISSSSSSINTSDDSSGKTSSNDLSDMSSKSLNESLTDYIESNPFELDKPSTTTNRISKTKYISKIIGVYKLNTKSFKTILNNLPNKHILDLSEFIQGDFLLSIYNNYENIFYLRNDFMLMNKLHTTIPLEINRNRLFFSFLFLLFYLHQNNYNTVNVELFNIGLSHNNSDKLISLKTIKGRRTVPLTINYEHGGYIEPILIDYVAMSNGQQNVFKLSNFMPFDNSVLYKNITDDIKYPYLPIDLIKKTFGTISSYVMENLCWIAKSTTNTEISIIDRQILYLLDMYDLFNGVPLSNNNITNVANYNMVQTNIIMNCHGDVSKCFQYNTNNLINDLDNLEVTILPPDNTSPTKLRMIPDDLKKLYQIYNNQYGIKIFGSIKSTNDIDIKMETFTRRVCLSRYWYSQLKNSYLVSRTILEDNYNFFEAFLDEQIDKLMKLIQQELYTIDGKFQVEIFVYHFLSLSTDYILPSINNFDYSNYLGESYVTMIYDFVTSIISNGNIRNKLFVFLALSKIIHLSMIRKLFMVFYIKENSNNNSELLQHGINNNKITMDKFDENIPFEFDANIYCQQRGLNINLIEYRYTILKELVPLKQNDIGTNNLGYYLFRLLDNNIKHTYVLYMYEDFKYCILGRIRFDKNKVPFKDYTYIPKTQDILYPKMDEYEFYKKNNEYVAFLDRGMDTQRMSVLDHDNIFIESFRQGEPVLSGASGHTADILLCAGYLEPSDSDRFVNKMKLMTILCVSVMFPRKDHSIFEMYRALQLFNKPMKTNEFTCPVENINTGSCFKWLLRDIVYNVGDNQLIGNQIYNTLTNRLNRSFEYYLSPKYYRIIEKIIEQFYKSTFQNININKFANDIRNIISDQQFNNINDELFIIMTIIRREGNKIWMNDAEYAYNIENKHISMRNFIDGNYSLPDFFTDDDIFLYEDNVITCTRSIYDFVKPVNSFDNTCLILQKIFWAASKPQCIW.

The disordered stretch occupies residues 93 to 145 (SKGNLRYVPTTSRNPSNTDTYSSSIDISSSSSSINTSDDSSGKTSSNDLSDMS). Low complexity predominate over residues 108 to 145 (SNTDTYSSSIDISSSSSSINTSDDSSGKTSSNDLSDMS).

Its subcellular location is the virion. This is an uncharacterized protein from Acanthamoeba polyphaga (Amoeba).